The chain runs to 248 residues: MLPTRPQTNSSRTINTSTQGSTLADILERVLDKGIVIAGDISISIASTELVHIRIRLLISSVDKAKEMGINWWESDPYLSTKAQRLVEENQQLQHRLESLEAKLNSLTSSSVKEEIPLAADVKDDLYQTSAKIPSPVDTPIEVLDFQAQSSGGTPPYVNTSMEILDFQAQTSAESSSPVGSTVEILDFQAQTSEESSSPVVSTVEILDFQAQTSEESSSPVGSTVEILDFQAQTSEEIPSSVDPAIDV.

The 1; truncated repeat unit spans residues 121 to 140 (DVKDDLYQTSAKIPSPVDTP). Residues 121–245 (DVKDDLYQTS…EEIPSSVDPA (125 aa)) form a 6 X 21 AA approximate tandem repeats region. Tandem repeats lie at residues 141–161 (IEVLDFQAQSSGGTPPYVNTS), 162–182 (MEILDFQAQTSAESSSPVGST), 183–203 (VEILDFQAQTSEESSSPVVST), 204–224 (VEILDFQAQTSEESSSPVGST), and 225–245 (VEILDFQAQTSEEIPSSVDPA).

The protein belongs to the gas vesicle GvpA family. Interacts with GvpA.

The protein localises to the gas vesicle. Functionally, a minor component of the gas vesicle, might be involved in nucleating gas vesicle formation. Gas vesicles (GV) are hollow, gas filled proteinaceous nanostructures. During planktonic growth they allow positioning of the organism at a favorable depth for light or nutrient acquisition. In Dolichospermum flosaquae (Anabaena flos-aquae), this protein is Gas vesicle protein J.